We begin with the raw amino-acid sequence, 809 residues long: MKIPLKWLKEYLPTDIQPAELAERMTMAGTEVAVLNSHKDKWPNVYVGQIMEVNRHPNADRLVLVKVDWGQGQETVVTGAPNCKVGDKVVFARTGAVLIDGHNGKEIVLKPAVLRGVESCGMVCSERELGLSDEHEGILVLPADALVGMLASEYLGEVILDLELTPNRGDLMCVTGVARELGALIDRLPAISDPDFKATGPDIKEKIEIEINNSKLCTRYTASLIEGIKLGESPDWLKERLIACGMRPINNVVDATNYVMLEFGQPLHAFDYDQIKSRHIIVRPAAEGEVLTTLDGVERKLSPDMLLITEPDRIIALAGVMGGENTEVTEKTSRILLESATFDKQSIRKTARGLKLQSEASARFEKGLSYELAPIALKRATQLILEIAGGQAASGLIDVLPNKKERNGIVLSLAKVNQILGYEKEPPDACKIAKRLGFIWLPEYVPGMEEFGYGATEDMVRIYPGYWRMDIETDIDMIEEVARIAGYHTIPCLPLDKAIPKIETPPLPGMKRFLRQILSGYGFQELISYSFTSREMLSRVSSGAEPEFLAISNPMSSEQEVMRTSLRPSLYASLAANRRFEKDGLRLYELGRVYLPKENKKQEEPEMLCAVIAGGSSQSRWQRNTAGFDFFDVKGIVESMVSRLGLSADFVVSDEHGLSHGYQAGILVGDMPVGILGQVSPQTADKFDITEPVYMFEINLSKLITRAMVRRKFNPINRFPAVERDLALVIDRHITNRQVIDILSEYDLVKNAELFDMYQGKQIAENKKSLAYHLLFQSDTHTLKDEEVDGVMSQILGRLNTETGAVLRS.

The tRNA-binding domain maps to 39–152 (KDKWPNVYVG…ADALVGMLAS (114 aa)). The 89-residue stretch at 404 to 492 (KERNGIVLSL…RIAGYHTIPC (89 aa)) folds into the B5 domain. 4 residues coordinate Mg(2+): aspartate 470, aspartate 476, glutamate 479, and glutamate 480. Positions 717-808 (NRFPAVERDL…LNTETGAVLR (92 aa)) constitute an FDX-ACB domain.

The protein belongs to the phenylalanyl-tRNA synthetase beta subunit family. Type 1 subfamily. In terms of assembly, tetramer of two alpha and two beta subunits. Requires Mg(2+) as cofactor.

The protein localises to the cytoplasm. The enzyme catalyses tRNA(Phe) + L-phenylalanine + ATP = L-phenylalanyl-tRNA(Phe) + AMP + diphosphate + H(+). The sequence is that of Phenylalanine--tRNA ligase beta subunit from Dehalococcoides mccartyi (strain CBDB1).